A 190-amino-acid chain; its full sequence is Vascular endothelial growth factor A (190 aa).

An N-terminal signal peptide occupies residues 1–26 (MNFLLSWVHWSLALLLYLHHAKWSQA). Cystine bridges form between Cys51–Cys93, Cys82–Cys127, and Cys86–Cys129. Asn100 carries N-linked (GlcNAc...) asparagine glycosylation.

Belongs to the PDGF/VEGF growth factor family. In terms of assembly, homodimer; disulfide-linked. Also found as heterodimer with PGF. Interacts with NRP1. Interacts with BSG. Interacts with CD82; this interaction inhibits VEGFA-mediated signaling pathway.

The protein resides in the secreted. Functionally, growth factor active in angiogenesis, vasculogenesis and endothelial cell growth. Induces endothelial cell proliferation, promotes cell migration, inhibits apoptosis and induces permeabilization of blood vessels. Binds to the FLT1/VEGFR1 and KDR/VEGFR2 receptors, heparan sulfate and heparin. Binding to NRP1 receptor initiates a signaling pathway needed for motor neuron axon guidance and cell body migration, including for the caudal migration of facial motor neurons from rhombomere 4 to rhombomere 6 during embryonic development. Also binds the DEAR/FBXW7-AS1 receptor. The protein is Vascular endothelial growth factor A (VEGFA) of Sus scrofa (Pig).